We begin with the raw amino-acid sequence, 82 residues long: uncharacterized protein (82 aa).

This is an uncharacterized protein from Anabaena cylindrica.